Reading from the N-terminus, the 510-residue chain is Cytochrome P450 monooxygenase btcC (510 aa).

Residues 1 to 21 (MSFPGVIFVVSFFPLLMGIAV) traverse the membrane as a helical segment. Cys-446 lines the heme pocket.

Belongs to the cytochrome P450 family. Heme is required as a cofactor.

The protein localises to the membrane. Its pathway is secondary metabolite biosynthesis; terpenoid biosynthesis. Cytochrome P450 monooxygenase; part of the gene cluster that mediates the biosynthesis of betaestacins. The bifunctional terpene synthase btcA converts isopentenyl diphosphate (IPP) and dimethylallyl diphosphate (DMAPP) into the sesterterpene betaestacin I. The C-terminal prenyltransferase (PT) domain of btcA catalyzes formation of GFPP, whereas the N-terminal terpene cyclase (TC) domain catalyzes the cyclization of GFPP into betaestacin I. The cytochrome P450 monooxygenase btcB is then responsible for the six-step oxidation of betaestacin I to yield betaestacin II. The roles of the cytochrome P450 monooxygenase btcC and the alpha-ketoglutarate-dependent dioxygenase btcD have not been identified yet. This chain is Cytochrome P450 monooxygenase btcC, found in Neocamarosporium betae (Beet black rot fungus).